The primary structure comprises 222 residues: Riboflavin kinase (222 aa).

The segment at M1 to H92 is H-T-H motif-like. A riboflavin kinase region spans residues Y93–D222. G102–R107 is a binding site for CDP. Mg(2+)-binding residues include T131 and N133. Residues S188 and E196 each contribute to the FMN site. V201–R204 serves as a coordination point for CDP.

Belongs to the archaeal riboflavin kinase family. Mg(2+) serves as cofactor.

The catalysed reaction is riboflavin + CTP = CDP + FMN + H(+). It participates in cofactor biosynthesis; FMN biosynthesis; FMN from riboflavin (CTP route): step 1/1. Catalyzes the CTP-dependent phosphorylation of riboflavin (vitamin B2) to form flavin mononucleotide (FMN). The protein is Riboflavin kinase (ribK) of Methanoregula boonei (strain DSM 21154 / JCM 14090 / 6A8).